The following is a 142-amino-acid chain: Organic hydroperoxide resistance protein-like 2 (142 aa).

The protein belongs to the OsmC/Ohr family.

The sequence is that of Organic hydroperoxide resistance protein-like 2 from Staphylococcus epidermidis (strain ATCC 35984 / DSM 28319 / BCRC 17069 / CCUG 31568 / BM 3577 / RP62A).